Reading from the N-terminus, the 93-residue chain is Small ribosomal subunit protein bS20 (93 aa).

The segment at 72–93 is disordered; the sequence is KNTASRKKSRLTRKFNSVYKAS. Basic residues predominate over residues 74-84; that stretch reads TASRKKSRLTR.

This sequence belongs to the bacterial ribosomal protein bS20 family.

Binds directly to 16S ribosomal RNA. The protein is Small ribosomal subunit protein bS20 of Carboxydothermus hydrogenoformans (strain ATCC BAA-161 / DSM 6008 / Z-2901).